A 633-amino-acid polypeptide reads, in one-letter code: tRNA uridine 5-carboxymethylaminomethyl modification enzyme MnmG (633 aa).

Residues 15–20 (GAGHAG), V127, and S182 each bind FAD. Position 276 to 290 (276 to 290 (GPRYCPSIEDKIVRF)) interacts with NAD(+). An FAD-binding site is contributed by Q373.

This sequence belongs to the MnmG family. In terms of assembly, homodimer. Heterotetramer of two MnmE and two MnmG subunits. It depends on FAD as a cofactor.

Its subcellular location is the cytoplasm. NAD-binding protein involved in the addition of a carboxymethylaminomethyl (cmnm) group at the wobble position (U34) of certain tRNAs, forming tRNA-cmnm(5)s(2)U34. This Streptococcus thermophilus (strain ATCC BAA-491 / LMD-9) protein is tRNA uridine 5-carboxymethylaminomethyl modification enzyme MnmG.